A 314-amino-acid polypeptide reads, in one-letter code: Olfactory receptor 5P66 (314 aa).

The Extracellular segment spans residues 1–28; the sequence is MAFLENGNHTAVSEFILLGLTDDPVLRI. Residue N8 is glycosylated (N-linked (GlcNAc...) asparagine). Residues 29 to 49 traverse the membrane as a helical segment; it reads VLFTIILCIYLVTVSGNLSTI. At 50-57 the chain is on the cytoplasmic side; sequence LLIRVSSQ. Residues 58–78 form a helical membrane-spanning segment; the sequence is LHHPMYFFLSHLASADIGLSS. Over 79–102 the chain is Extracellular; sequence SVTPNMLVNFLVERSTISYLGCGI. A disulfide bond links C100 and C192. A helical transmembrane segment spans residues 103-123; the sequence is QLSSAALFGATECFLLAAMAY. Residues 124-136 are Cytoplasmic-facing; the sequence is DRFMAICNPLLYS. A helical membrane pass occupies residues 137–157; sequence TKMSTKVCVQLIVGSYIAGFL. The Extracellular portion of the chain corresponds to 158–199; it reads NASSFLLSFFSLLFCGQNIINDFFCDFAPLAELSCSDVSVFV. Residues 200–220 form a helical membrane-spanning segment; it reads VVISFSAGTVTMLTVFVIAIS. Residues 221–240 lie on the Cytoplasmic side of the membrane; the sequence is YSYILITILKMRSTEGRQKA. Residues 241–261 traverse the membrane as a helical segment; it reads FSTCTSHLTAVTLFYGTVTFI. The Extracellular segment spans residues 262 to 274; that stretch reads YVMPKSSYSMDQN. A helical membrane pass occupies residues 275–295; sequence KIISVFYMVVVPMLNPLIYSL. Residues 296–314 lie on the Cytoplasmic side of the membrane; the sequence is RNNEIKGALKRHFDRKTFS.

This sequence belongs to the G-protein coupled receptor 1 family.

It localises to the cell membrane. Its function is as follows. Potential odorant receptor. The chain is Olfactory receptor 5P66 from Mus musculus (Mouse).